The primary structure comprises 237 residues: Pyridoxine 5'-phosphate synthase (237 aa).

2 residues coordinate 3-amino-2-oxopropyl phosphate: asparagine 7 and arginine 18. Catalysis depends on histidine 43, which acts as the Proton acceptor. 1-deoxy-D-xylulose 5-phosphate is bound by residues arginine 45 and histidine 50. Residue glutamate 70 is the Proton acceptor of the active site. Threonine 100 is a 1-deoxy-D-xylulose 5-phosphate binding site. Catalysis depends on histidine 190, which acts as the Proton donor. 3-amino-2-oxopropyl phosphate contacts are provided by residues aspartate 191 and 213-214 (GH).

It belongs to the PNP synthase family. As to quaternary structure, homooctamer; tetramer of dimers.

The protein resides in the cytoplasm. The catalysed reaction is 3-amino-2-oxopropyl phosphate + 1-deoxy-D-xylulose 5-phosphate = pyridoxine 5'-phosphate + phosphate + 2 H2O + H(+). It participates in cofactor biosynthesis; pyridoxine 5'-phosphate biosynthesis; pyridoxine 5'-phosphate from D-erythrose 4-phosphate: step 5/5. Its function is as follows. Catalyzes the complicated ring closure reaction between the two acyclic compounds 1-deoxy-D-xylulose-5-phosphate (DXP) and 3-amino-2-oxopropyl phosphate (1-amino-acetone-3-phosphate or AAP) to form pyridoxine 5'-phosphate (PNP) and inorganic phosphate. This Bacteroides fragilis (strain ATCC 25285 / DSM 2151 / CCUG 4856 / JCM 11019 / LMG 10263 / NCTC 9343 / Onslow / VPI 2553 / EN-2) protein is Pyridoxine 5'-phosphate synthase.